The chain runs to 184 residues: Class II hydrophobin 6 (184 aa).

The N-terminal stretch at 1–16 (MNFMLLSAALASMAVA) is a signal peptide. 4 disulfide bridges follow: Cys-122–Cys-169, Cys-130–Cys-160, Cys-131–Cys-143, and Cys-170–Cys-181.

The protein belongs to the cerato-ulmin hydrophobin family. In terms of assembly, homotetramer. Further self-assembles to form highly ordered films at water-air interfaces through intermolecular interactions. Expressed in the mycellium.

The protein resides in the secreted. In terms of biological role, aerial growth, conidiation, and dispersal of filamentous fungi in the environment rely upon a capability of their secreting small amphipathic proteins called hydrophobins (HPBs) with low sequence identity. Class I can self-assemble into an outermost layer of rodlet bundles on aerial cell surfaces, conferring cellular hydrophobicity that supports fungal growth, development and dispersal; whereas Class II form highly ordered films at water-air interfaces through intermolecular interactions but contribute nothing to the rodlet structure. Hcf-6 is a class II hydrophobin that is involved in adhesion and in tomato plants infection. Is secreted to form a coat both around and beneath the fungus. This chain is Class II hydrophobin 6, found in Passalora fulva (Tomato leaf mold).